We begin with the raw amino-acid sequence, 114 residues long: Large ribosomal subunit protein uL18 (114 aa).

The protein belongs to the universal ribosomal protein uL18 family. As to quaternary structure, part of the 50S ribosomal subunit; part of the 5S rRNA/L5/L18/L25 subcomplex. Contacts the 5S and 23S rRNAs.

This is one of the proteins that bind and probably mediate the attachment of the 5S RNA into the large ribosomal subunit, where it forms part of the central protuberance. This Azobacteroides pseudotrichonymphae genomovar. CFP2 protein is Large ribosomal subunit protein uL18.